A 147-amino-acid chain; its full sequence is Prefoldin subunit alpha (147 aa).

It belongs to the prefoldin subunit alpha family. In terms of assembly, heterohexamer of two alpha and four beta subunits.

It localises to the cytoplasm. Molecular chaperone capable of stabilizing a range of proteins. Seems to fulfill an ATP-independent, HSP70-like function in archaeal de novo protein folding. This is Prefoldin subunit alpha (pfdA) from Saccharolobus solfataricus (strain ATCC 35092 / DSM 1617 / JCM 11322 / P2) (Sulfolobus solfataricus).